Reading from the N-terminus, the 467-residue chain is Cis-zeatin O-glucosyltransferase 1 (467 aa).

The active-site Proton acceptor is His21. An anthocyanidin contacts are provided by His21 and Asn91. Catalysis depends on Asp127, which acts as the Charge relay. The UDP-alpha-D-glucose site is built by Ala343, Gln345, His360, Trp363, Asn364, Ser365, Glu368, Asp384, and Gln385.

It belongs to the UDP-glycosyltransferase family. As to expression, highly expressed in root. Expressed at lower level in kernel and cob. Weakly expressed in leaves. Weakly or not expressed in stems.

It carries out the reaction cis-zeatin + UDP-alpha-D-glucose = O-beta-D-glucosyl-cis-zeatin + UDP + H(+). Its function is as follows. Utilizes UDP-glucose as the sugar donor and catalyzes the formation of O-beta-D-glucosyl-cis-zeatin from cis-zeatin. May regulate active versus storage forms of cytokinins and could have an impact on seed growth. This Zea mays (Maize) protein is Cis-zeatin O-glucosyltransferase 1 (CISZOG1).